The primary structure comprises 160 residues: uncharacterized protein (160 aa).

Positions 2 to 140 (MIIIPNNEIA…KARRLKPEIP (139 aa)) constitute an N-acetyltransferase domain.

This is an uncharacterized protein from Bacillus subtilis (strain 168).